We begin with the raw amino-acid sequence, 749 residues long: uncharacterized protein (749 aa).

Residues 63-243 (FQYVQKGESI…QLTGKPMRLV (181 aa)) form the Helicase ATP-binding domain. Position 76 to 83 (76 to 83 (TPTASGKT)) interacts with ATP. The short motif at 185-188 (DELH) is the DEVH box element. Positions 276–430 (EVNELAKEFL…SARINPENLI (155 aa)) constitute a Helicase C-terminal domain.

The protein belongs to the helicase family.

This is an uncharacterized protein from Bacillus subtilis (strain 168).